The primary structure comprises 618 residues: D-glucuronyl C5-epimerase (618 aa).

At 1 to 11 (MRCLAARVNYK) the chain is on the cytoplasmic side. A helical; Signal-anchor for type II membrane protein membrane pass occupies residues 12-29 (TLIIICALFTLVTVLLWN). Residues 30-618 (KCSSDKAIQF…YLKGSRAKHN (589 aa)) lie on the Lumenal side of the membrane. Substrate is bound by residues tyrosine 180, 185–187 (RDR), glutamine 202, tyrosine 210, glutamine 213, and glutamine 216. Residues threonine 238, glutamate 240, threonine 269, asparagine 270, and aspartate 393 each contribute to the Ca(2+) site. Substrate-binding positions include 430-433 (KLGE), 500-501 (EY), asparagine 511, tyrosine 515, tyrosine 561, arginine 564, and 573-582 (NLARWDYHTT).

Belongs to the D-glucuronyl C5-epimerase family. Homodimer. Interacts with HS2ST1. Widely expressed with highest levels in lung and lowest levels in spleen.

The protein localises to the golgi apparatus membrane. It carries out the reaction [heparosan-N-sulfate](n) = [heparan-N-sulfate](n). Its pathway is glycan metabolism; heparan sulfate biosynthesis. The protein operates within glycan metabolism; heparin biosynthesis. Its function is as follows. Converts D-glucuronic acid residues adjacent to N-sulfate sugar residues to L-iduronic acid residues, both in maturing heparan sulfate (HS) and heparin chains. This is important for further modifications that determine the specificity of interactions between these glycosaminoglycans and proteins. In Mus musculus (Mouse), this protein is D-glucuronyl C5-epimerase (Glce).